The primary structure comprises 425 residues: MPPKKADGVKKARAPAKRKLAEEFPSGEVLTDNAKKKWKLGSAVGQGGFGLLYLANEDSSGPVTADAPYVIKVEPSDNGPLFSELKFYMRAAKPDLIGAWMKSKKMEYLGVPKYWGSGFHEKNGKRYRFMVMDRFGTDLQKLFEGNGKKFSRKLVLQLGLRLLDILEYIHDHEYVHADIKASNLLLSYTNPNQVFLVDYGLAYRYAPEGVPKEYKEDPKRCHDGTIEFTSIDAHKGVSPSRRADLEIMGYCMIQWLCSRLPWEDKLQDPLYVRDSKLRCRDNIDEFLKSCFASGNIPAEMGKFMQEVKVLGYTDRPDYDKLRGILQQGLKSIGSTDDKKLDFGVATNSTSLPSVKTPKRKKAEEKGQSADETDSTPAKKRRAPQKKEVNGAKKTASPAKRPVKKETQASSEPAVKKSRGRPKKNS.

A Protein kinase domain is found at 38–329 (WKLGSAVGQG…KLRGILQQGL (292 aa)). ATP-binding positions include 44–52 (VGQGGFGLL) and K72. D178 functions as the Proton acceptor in the catalytic mechanism. The tract at residues 343 to 425 (GVATNSTSLP…KSRGRPKKNS (83 aa)) is disordered. The segment covering 415 to 425 (KKSRGRPKKNS) has biased composition (basic residues).

It belongs to the protein kinase superfamily. CK1 Ser/Thr protein kinase family. VRK subfamily.

The protein resides in the nucleus. Its subcellular location is the cytoplasm. The protein localises to the cajal body. The catalysed reaction is L-seryl-[protein] + ATP = O-phospho-L-seryl-[protein] + ADP + H(+). The enzyme catalyses L-threonyl-[protein] + ATP = O-phospho-L-threonyl-[protein] + ADP + H(+). Serine/threonine kinase involved in the regulation of key cellular processes including the cell cycle, nuclear condensation, transcription regulation, and DNA damage response. Controls chromatin organization and remodeling by mediating phosphorylation of histone H3 on 'Thr-4' and histone H2AX (H2aXT4ph). It also phosphorylates KAT5 in response to DNA damage, promoting KAT5 association with chromatin and histone acetyltransferase activity. Is involved in the regulation of cell cycle progression of neural progenitors, and is required for proper cortical neuronal migration. Is involved in neurite elongation and branching in motor neurons, and has an essential role in Cajal bodies assembly, acting through COIL phosphorylation and the control of coilin degradation. Involved in Golgi disassembly during the cell cycle: following phosphorylation by PLK3 during mitosis, it is required to induce Golgi fragmentation. Phosphorylates BANF1: disrupts its ability to bind DNA, reduces its binding to LEM domain-containing proteins and causes its relocalization from the nucleus to the cytoplasm. Phosphorylates TP53BP1 and p53/TP53 on 'Thr-18', preventing the interaction between p53/TP53 and MDM2. Phosphorylates ATF2 which activates its transcriptional activity. Phosphorylates JUN. In Danio rerio (Zebrafish), this protein is Serine/threonine-protein kinase VRK1 (vrk1).